The following is a 706-amino-acid chain: Polyribonucleotide nucleotidyltransferase (706 aa).

Mg(2+) is bound by residues aspartate 487 and aspartate 493. Positions proline 553 to isoleucine 612 constitute a KH domain. One can recognise an S1 motif domain in the interval glycine 622–lysine 692.

Belongs to the polyribonucleotide nucleotidyltransferase family. The cofactor is Mg(2+).

The protein localises to the cytoplasm. The catalysed reaction is RNA(n+1) + phosphate = RNA(n) + a ribonucleoside 5'-diphosphate. In terms of biological role, involved in mRNA degradation. Catalyzes the phosphorolysis of single-stranded polyribonucleotides processively in the 3'- to 5'-direction. The sequence is that of Polyribonucleotide nucleotidyltransferase from Neisseria meningitidis serogroup A / serotype 4A (strain DSM 15465 / Z2491).